A 185-amino-acid chain; its full sequence is Mitochondrial inner membrane protease atp23 (185 aa).

A divalent metal cation is bound at residue H86. The active site involves E87. H90 serves as a coordination point for a divalent metal cation.

The protein belongs to the peptidase M76 family.

It localises to the mitochondrion inner membrane. Has a dual role in the assembly of mitochondrial ATPase. Acts as a protease that removes N-terminal residues of mitochondrial ATPase CF(0) subunit 6 at the intermembrane space side. Also involved in the correct assembly of the membrane-embedded ATPase CF(0) particle, probably mediating association of subunit 6 with the subunit 9 ring. This Schizosaccharomyces pombe (strain 972 / ATCC 24843) (Fission yeast) protein is Mitochondrial inner membrane protease atp23 (atp23).